The primary structure comprises 237 residues: Purine nucleoside phosphorylase DeoD-type (237 aa).

His-4 is an a purine D-ribonucleoside binding site. Phosphate contacts are provided by residues Gly-20, Arg-24, Arg-43, and Arg-87–Thr-90. A purine D-ribonucleoside is bound by residues Glu-179 to Glu-181 and Ser-203 to Asp-204. Residue Asp-204 is the Proton donor of the active site.

Belongs to the PNP/UDP phosphorylase family. Homohexamer; trimer of homodimers.

It catalyses the reaction a purine D-ribonucleoside + phosphate = a purine nucleobase + alpha-D-ribose 1-phosphate. It carries out the reaction a purine 2'-deoxy-D-ribonucleoside + phosphate = a purine nucleobase + 2-deoxy-alpha-D-ribose 1-phosphate. Functionally, catalyzes the reversible phosphorolytic breakdown of the N-glycosidic bond in the beta-(deoxy)ribonucleoside molecules, with the formation of the corresponding free purine bases and pentose-1-phosphate. The polypeptide is Purine nucleoside phosphorylase DeoD-type (Streptococcus pyogenes serotype M12 (strain MGAS2096)).